Reading from the N-terminus, the 175-residue chain is Ribosome maturation factor RimM (175 aa).

Positions 96–175 constitute a PRC barrel domain; that stretch reads EGDYYWHDLI…TIEVDWDAGF (80 aa).

Belongs to the RimM family. In terms of assembly, binds ribosomal protein uS19.

It is found in the cytoplasm. An accessory protein needed during the final step in the assembly of 30S ribosomal subunit, possibly for assembly of the head region. Essential for efficient processing of 16S rRNA. May be needed both before and after RbfA during the maturation of 16S rRNA. It has affinity for free ribosomal 30S subunits but not for 70S ribosomes. This Actinobacillus succinogenes (strain ATCC 55618 / DSM 22257 / CCUG 43843 / 130Z) protein is Ribosome maturation factor RimM.